The chain runs to 167 residues: Phosphopantetheine adenylyltransferase (167 aa).

Substrate is bound at residue T10. ATP contacts are provided by residues T10–F11 and H18. Substrate is bound by residues A77 and R91. Residues G92 to R94, E102, and Y127 to S133 each bind ATP.

Belongs to the bacterial CoaD family. Homohexamer. Mg(2+) serves as cofactor.

Its subcellular location is the cytoplasm. The enzyme catalyses (R)-4'-phosphopantetheine + ATP + H(+) = 3'-dephospho-CoA + diphosphate. Its pathway is cofactor biosynthesis; coenzyme A biosynthesis; CoA from (R)-pantothenate: step 4/5. In terms of biological role, reversibly transfers an adenylyl group from ATP to 4'-phosphopantetheine, yielding dephospho-CoA (dPCoA) and pyrophosphate. The protein is Phosphopantetheine adenylyltransferase of Thermomicrobium roseum (strain ATCC 27502 / DSM 5159 / P-2).